The primary structure comprises 297 residues: Cytidine deaminase (297 aa).

CMP/dCMP-type deaminase domains follow at residues 54 to 174 (SSVE…FGPK) and 192 to 297 (LRGD…YIEV). Residue 95–97 (NQE) coordinates substrate. Position 108 (His-108) interacts with Zn(2+). Glu-110 functions as the Proton donor in the catalytic mechanism. The Zn(2+) site is built by Cys-135 and Cys-138.

It belongs to the cytidine and deoxycytidylate deaminase family. Homodimer. Zn(2+) is required as a cofactor.

It carries out the reaction cytidine + H2O + H(+) = uridine + NH4(+). The enzyme catalyses 2'-deoxycytidine + H2O + H(+) = 2'-deoxyuridine + NH4(+). Functionally, this enzyme scavenges exogenous and endogenous cytidine and 2'-deoxycytidine for UMP synthesis. The chain is Cytidine deaminase from Actinobacillus pleuropneumoniae serotype 5b (strain L20).